The primary structure comprises 104 residues: Large ribosomal subunit protein uL24 (104 aa).

It belongs to the universal ribosomal protein uL24 family. In terms of assembly, part of the 50S ribosomal subunit.

Functionally, one of two assembly initiator proteins, it binds directly to the 5'-end of the 23S rRNA, where it nucleates assembly of the 50S subunit. Its function is as follows. One of the proteins that surrounds the polypeptide exit tunnel on the outside of the subunit. In Halothermothrix orenii (strain H 168 / OCM 544 / DSM 9562), this protein is Large ribosomal subunit protein uL24.